The sequence spans 339 residues: Protein LicA (339 aa).

9 repeat units span residues isoleucine 4–serine 7, isoleucine 8–serine 11, isoleucine 12–serine 15, isoleucine 16–serine 19, isoleucine 20–serine 23, isoleucine 24–serine 27, isoleucine 28–serine 31, isoleucine 32–serine 35, and isoleucine 36–serine 39. The segment at isoleucine 4 to serine 39 is 9 X 4 AA tandem repeats of I-N-Q-S.

The protein belongs to the peptidase S49 family.

In terms of biological role, mediates phase variation of the LOS 6A2 and 12D9 epitopes. Phase variation of H.influenza LOS epitopes expressed by LicA is determined by a translational switch. The sequence is that of Protein LicA (licA) from Haemophilus influenzae.